We begin with the raw amino-acid sequence, 736 residues long: MTTELENLSEAEAANELMRLARQIAKHDRLYHAEDAPEITDQEYDALVRRNAELEAAFPHLVREDSPSRKVGHAVAASPLSKVTHEVRMMSLDNAFADEEVAEFVARVRRYLNIGEDEAIAFTAEDKIDGLSCSLRYENGKLVRAATRGDGQVGEDVTPNVAHIGDIPQELTPLPLAGGAGGGPLDDSGSAPTPDPSRRREGKWNGPAVFEIRGEVYMATADFHALNARLMDEARAEADEKDNAFDTAKVRQFANPRNAAAGSLRQKDASVTATRPLRFWAHGWGAVEGDVPGETQVEVVEQIAAWGVPVSPLFRRCETLEEMLAHYEAIGAQRADLPYEIDGVVYKVDRLDYQQRLGFVAKAPRWAIARKFPAEQAETTLENIDIQVGRTGKLTPVGRLAPVLVGGVTVTNVTLHNRDEIERLGVRPGDRVVVQRAGDVIPQVVRNLTPDEKRDSFEFPDTCPECGSEAVSEEGGVDVRCTGGLICPAQRTERLKHFVSRAALDIDGLGEKTIDQFFALGWLESPADIFRLKDRRDEILALEGWMDKSVDNLLASVEARREPDTARLLLGLGIRHVGAVTARDLMKYFHELPALRETAEKARAGDEEAVVALTSIDGIGSAVVEALGDFFHEEHNRAVWDDLLSEVSPPRYEVETLDSPVAGKTVVFTGKLETMSRDEAKAQAERLGAKASGSVSAKTDLLVAGPGAGSKLKKAQDLGIEVIDEAGWAEIVAAAG.

NAD(+) contacts are provided by residues 41 to 45, 91 to 92, and Glu-125; these read DQEYD and SL. The N6-AMP-lysine intermediate role is filled by Lys-127. NAD(+) is bound at residue Arg-148. Residues 170–205 form a disordered region; that stretch reads ELTPLPLAGGAGGGPLDDSGSAPTPDPSRRREGKWN. Positions 215, 347, and 371 each coordinate NAD(+). Zn(2+) contacts are provided by Cys-463, Cys-466, Cys-481, and Cys-487. One can recognise a BRCT domain in the interval 656–736; it reads TLDSPVAGKT…GWAEIVAAAG (81 aa).

Belongs to the NAD-dependent DNA ligase family. LigA subfamily. Mg(2+) is required as a cofactor. Requires Mn(2+) as cofactor.

It catalyses the reaction NAD(+) + (deoxyribonucleotide)n-3'-hydroxyl + 5'-phospho-(deoxyribonucleotide)m = (deoxyribonucleotide)n+m + AMP + beta-nicotinamide D-nucleotide.. Its function is as follows. DNA ligase that catalyzes the formation of phosphodiester linkages between 5'-phosphoryl and 3'-hydroxyl groups in double-stranded DNA using NAD as a coenzyme and as the energy source for the reaction. It is essential for DNA replication and repair of damaged DNA. The sequence is that of DNA ligase from Erythrobacter litoralis (strain HTCC2594).